The chain runs to 473 residues: Putative F-box/LRR-repeat protein At3g59170 (473 aa).

The F-box domain occupies 6–54 (KDMINVLPDALLCHILSFLTTKEAASTSLLSRRWRYLLAFVPNLEFDDS). LRR repeat units lie at residues 168-194 (TIKIRDGPFIDVKHVHLPKLKTLYLQS), 196-221 (MFDENDIGFRKLLSGCPVLEELVLDG), 229-254 (SFTVSVATLKRLTFCCQKMSSFGYMH), 333-364 (VLYLSPETLEVLTYCCKQIPIFENLSHLTIKS), and 365-390 (DPNVGWKPLTKLLKNSPKLETLVFQG).

The protein is Putative F-box/LRR-repeat protein At3g59170 of Arabidopsis thaliana (Mouse-ear cress).